The following is a 361-amino-acid chain: Cyclin-D3-3 (361 aa).

Belongs to the cyclin family. Cyclin D subfamily.

Promotes divisions in the guard cells (GCs) after the guard mother cells (GMC) symmetric division. The sequence is that of Cyclin-D3-3 (CYCD3-3) from Arabidopsis thaliana (Mouse-ear cress).